The primary structure comprises 301 residues: Mitochondrial carnitine/acylcarnitine carrier protein (301 aa).

Alanine 2 carries the post-translational modification N-acetylalanine. Over 2–12 (AEEPKPISPLK) the chain is Cytoplasmic. 3 Solcar repeats span residues 8 to 99 (ISPL…GKRL), 108 to 196 (LTYP…LKNL), and 207 to 293 (LSVP…PMKI). The helical transmembrane segment at 13–31 (NLLAGGFGGVCLVFVGHPL) threads the bilayer. The Mitochondrial matrix segment spans residues 32 to 73 (DTVKVRLQTQPPSLPGQPPMYSGTIDCFRKTLFREGITGLYR). Residues 74–93 (GMAAPIIGVTPMFAVCFFGF) form a helical membrane-spanning segment. Over 94–112 (GLGKRLQQKSPEDELTYPQ) the chain is Cytoplasmic. Residues 113–131 (LFTAGMLSGVFTTGIMTPG) traverse the membrane as a helical segment. The Mitochondrial matrix segment spans residues 132–170 (ERIKCLLQIQASSGKNKYSGTLDCAKKLYQEFGIRGFYK). Lysine 148 and lysine 157 each carry N6-acetyllysine. At lysine 170 the chain carries N6-acetyllysine; alternate. At lysine 170 the chain carries N6-succinyllysine; alternate. A helical transmembrane segment spans residues 171–190 (GTALTLMRDVPASGMYFMTY). Residues 191 to 211 (EWLKNLFTPQGKSVHDLSVPR) are Cytoplasmic-facing. The chain crosses the membrane as a helical span at residues 212–230 (VLVAGGFRGIFNWVVAIPP). Over 231-267 (DVLKSRFQTAPPGKYPNGFRDVLRELIREEGVTSLYK) the chain is Mitochondrial matrix. Residues 268–287 (GFNAVMIRAFPANAACFLGF) form a helical membrane-spanning segment. The Cytoplasmic segment spans residues 288–301 (EIPMKILNWIAPNL).

Belongs to the mitochondrial carrier (TC 2.A.29) family. The N-terminus is blocked.

The protein resides in the mitochondrion inner membrane. The enzyme catalyses O-acetyl-(R)-carnitine(in) + (R)-carnitine(out) = O-acetyl-(R)-carnitine(out) + (R)-carnitine(in). It catalyses the reaction an O-acyl-(R)-carnitine(in) + (R)-carnitine(out) = an O-acyl-(R)-carnitine(out) + (R)-carnitine(in). The catalysed reaction is O-propanoyl-(R)-carnitine(in) + (R)-carnitine(out) = O-propanoyl-(R)-carnitine(out) + (R)-carnitine(in). It carries out the reaction O-hexadecanoyl-(R)-carnitine(in) + (R)-carnitine(out) = O-hexadecanoyl-(R)-carnitine(out) + (R)-carnitine(in). The enzyme catalyses O-octanoyl-(R)-carnitine(in) + (R)-carnitine(out) = O-octanoyl-(R)-carnitine(out) + (R)-carnitine(in). It catalyses the reaction (R)-carnitine(in) = (R)-carnitine(out). In terms of biological role, mediates the electroneutral exchange of acylcarnitines (O-acyl-(R)-carnitine or L-acylcarnitine) of different acyl chain lengths (ranging from O-acetyl-(R)-carnitine to long-chain O-acyl-(R)-carnitines) with free carnitine ((R)-carnitine or L-carnitine) across the mitochondrial inner membrane, via a ping-pong mechanism. Key player in the mitochondrial oxidation pathway, it translocates the fatty acids in the form of acylcarnitines into the mitochondrial matrix, where the carnitine palmitoyltransferase 2 (CPT-2) activates them to undergo fatty acid beta-oxidation. Catalyzes the unidirectional transport (uniport) of carnitine at lower rates than the antiport (exchange). This is Mitochondrial carnitine/acylcarnitine carrier protein from Rattus norvegicus (Rat).